The primary structure comprises 333 residues: Chemokine XC receptor 1 (333 aa).

Topologically, residues 1–31 are extracellular; the sequence is MESSGNPESTTFFYYDLQSQPCENQAWVFAT. Residues 32-59 traverse the membrane as a helical segment; that stretch reads LATTVLYCLVFLLSLVGNSLVLWVLVKY. The Cytoplasmic portion of the chain corresponds to 60 to 69; it reads ESLESLTNIF. A helical membrane pass occupies residues 70–89; that stretch reads ILNLCLSDLVFACLLPVWIS. Residues 90–103 lie on the Extracellular side of the membrane; it reads PYHWGWVLGDFLCK. Cys102 and Cys175 are oxidised to a cystine. A helical membrane pass occupies residues 104 to 125; the sequence is LLNMIFSISLYSSIFFLTIMTI. Residues 126-142 are Cytoplasmic-facing; the sequence is HRYLSVVSPLSTLRVPT. A helical membrane pass occupies residues 143-167; it reads LRCRVLVTMAVWVASILSSILDTIF. At 168-190 the chain is on the extracellular side; that stretch reads HKVLSSGCDYSELTWYLTSVYQH. A helical transmembrane segment spans residues 191–209; that stretch reads NLFFLLSLGIILFCYVEIL. At 210–225 the chain is on the cytoplasmic side; the sequence is RTLFRSRSKRRHRTVK. Residues 226–250 form a helical membrane-spanning segment; that stretch reads LIFAIVVAYFLSWGPYNFTLFLQTL. The Extracellular segment spans residues 251-267; that stretch reads FRTQIIRSCEAKQQLEY. A helical transmembrane segment spans residues 268-291; that stretch reads ALLICRNLAFSHCCFNPVLYVFVG. Topologically, residues 292–333 are cytoplasmic; sequence VKFRTHLKHVLRQFWFCRLQAPSPASIPHSPGAFAYEGASFY.

Belongs to the G-protein coupled receptor 1 family.

It localises to the cell membrane. Receptor for chemokines SCYC1 and SCYC2. Subsequently transduces a signal by increasing the intracellular calcium ions level. Receptor for XCL1/Lymphotactin. In Homo sapiens (Human), this protein is Chemokine XC receptor 1 (XCR1).